The chain runs to 521 residues: Circadian clock oscillator protein KaiC (521 aa).

KaiC domains follow at residues 1–248 (MNEP…INIF) and 262–521 (ARIS…LDEE). Residues Gly-50, Thr-51, Gly-52, Lys-53, Thr-54, Leu-55, Ser-90, Lys-225, Leu-226, Arg-227, Thr-229, His-231, Thr-241, Thr-291, Gly-292, Thr-293, Gly-294, Lys-295, Thr-296, and Leu-297 each coordinate ATP. Thr-54 serves as a coordination point for Mg(2+). Thr-296 serves as a coordination point for Mg(2+). Residue Glu-319 participates in Mg(2+) binding. Trp-332 contacts ATP. The residue at position 432 (Ser-432) is a Phosphoserine; by autocatalysis. Thr-433 is modified (phosphothreonine; by autocatalysis). The ATP site is built by Arg-452, Lys-458, Met-459, Arg-460, Ser-462, His-464, and Lys-466.

It belongs to the KaiC family. In terms of assembly, homohexamer; hexamerization is dependent on ATP-binding. The KaiABC complex composition changes during the circadian cycle to control KaiC phosphorylation. Complexes KaiC(6), KaiA(2-4):KaiC(6), KaiB(6):KaiC(6) and KaiC(6):KaiB(6):KaiA(12) are among the most important forms, many form cooperatively. KaiC interacts with SasA, activating its autokinase function and leading to RpaA activation. Requires Mg(2+) as cofactor. Phosphorylated on serine and threonine residues by autocatalysis. Has a 4 step phosphorylation cycle; the autokinase acts first on Thr-433, then Ser-432. When Ser-432 is modified KaiC switches to an autophosphatase mode, acting first on phospho-Thr-433 then phospho-Ser-432.

It carries out the reaction L-seryl-[protein] + ATP = O-phospho-L-seryl-[protein] + ADP + H(+). It catalyses the reaction L-threonyl-[protein] + ATP = O-phospho-L-threonyl-[protein] + ADP + H(+). The catalysed reaction is ATP + H2O = ADP + phosphate + H(+). The interaction with KaiA enhances its phosphorylation status, while the interaction with KaiB decreases it. Functionally, central component of the KaiABC oscillator complex, which constitutes the main circadian regulator in cyanobacteria. Complex composition changes during the circadian cycle to control KaiC phosphorylation. KaiA stimulates KaiC autophosphorylation, while KaiB sequesters KaiA, leading to KaiC autodephosphorylation. Clock output pathways impact the RpaA transcriptional regulator. KaiC enhances the autophosphorylation activity of SasA, which then transfers its phosphate group to RpaA to activate it. KaiB and KaiC together enhance the phospho-RpaA dephosphatase activity of CikA. Has a weak, temperature-independent ATPase activity; ATPase activity defines the circadian period. The phosphorylation state of KaiC modulates its ATPase activity and effects KaiB binding. The protein is Circadian clock oscillator protein KaiC of Rippkaea orientalis (strain PCC 8801 / RF-1) (Cyanothece sp. (strain PCC 8801)).